Consider the following 122-residue polypeptide: Small ribosomal subunit protein uS13 (122 aa).

The tract at residues 94-122 (KQLPVRGQRTHTNARTRKGKAKPIAGKKK) is disordered.

Belongs to the universal ribosomal protein uS13 family. Part of the 30S ribosomal subunit. Forms a loose heterodimer with protein S19. Forms two bridges to the 50S subunit in the 70S ribosome.

Functionally, located at the top of the head of the 30S subunit, it contacts several helices of the 16S rRNA. In the 70S ribosome it contacts the 23S rRNA (bridge B1a) and protein L5 of the 50S subunit (bridge B1b), connecting the 2 subunits; these bridges are implicated in subunit movement. Contacts the tRNAs in the A and P-sites. In Methylorubrum populi (strain ATCC BAA-705 / NCIMB 13946 / BJ001) (Methylobacterium populi), this protein is Small ribosomal subunit protein uS13.